A 470-amino-acid chain; its full sequence is Light-independent protochlorophyllide reductase subunit N (470 aa).

[4Fe-4S] cluster-binding residues include cysteine 22, cysteine 47, and cysteine 107.

The protein belongs to the BchN/ChlN family. In terms of assembly, protochlorophyllide reductase is composed of three subunits; ChlL, ChlN and ChlB. Forms a heterotetramer of two ChlB and two ChlN subunits. Requires [4Fe-4S] cluster as cofactor.

The protein localises to the plastid. It is found in the chloroplast. It carries out the reaction chlorophyllide a + oxidized 2[4Fe-4S]-[ferredoxin] + 2 ADP + 2 phosphate = protochlorophyllide a + reduced 2[4Fe-4S]-[ferredoxin] + 2 ATP + 2 H2O. It participates in porphyrin-containing compound metabolism; chlorophyll biosynthesis (light-independent). In terms of biological role, component of the dark-operative protochlorophyllide reductase (DPOR) that uses Mg-ATP and reduced ferredoxin to reduce ring D of protochlorophyllide (Pchlide) to form chlorophyllide a (Chlide). This reaction is light-independent. The NB-protein (ChlN-ChlB) is the catalytic component of the complex. The chain is Light-independent protochlorophyllide reductase subunit N from Pinus koraiensis (Korean pine).